The sequence spans 392 residues: Succinate--CoA ligase [ADP-forming] subunit beta (392 aa).

Residues 9-248 enclose the ATP-grasp domain; that stretch reads KGILKQFGVA…ITEEDPLEYE (240 aa). ATP is bound by residues K50, 57–59, E103, M106, and E111; that span reads GRG. Residues N203 and D217 each contribute to the Mg(2+) site. Residues N268 and 325–327 each bind substrate; that span reads GIV.

The protein belongs to the succinate/malate CoA ligase beta subunit family. Heterotetramer of two alpha and two beta subunits. Mg(2+) is required as a cofactor.

It catalyses the reaction succinate + ATP + CoA = succinyl-CoA + ADP + phosphate. The enzyme catalyses GTP + succinate + CoA = succinyl-CoA + GDP + phosphate. It functions in the pathway carbohydrate metabolism; tricarboxylic acid cycle; succinate from succinyl-CoA (ligase route): step 1/1. In terms of biological role, succinyl-CoA synthetase functions in the citric acid cycle (TCA), coupling the hydrolysis of succinyl-CoA to the synthesis of either ATP or GTP and thus represents the only step of substrate-level phosphorylation in the TCA. The beta subunit provides nucleotide specificity of the enzyme and binds the substrate succinate, while the binding sites for coenzyme A and phosphate are found in the alpha subunit. In Chlorobaculum tepidum (strain ATCC 49652 / DSM 12025 / NBRC 103806 / TLS) (Chlorobium tepidum), this protein is Succinate--CoA ligase [ADP-forming] subunit beta.